The following is a 126-amino-acid chain: Small ribosomal subunit protein uS13 (126 aa).

A disordered region spans residues 92-126; that stretch reads HRRGLPVRGQRTKTNARTRKGPKKTVAGKKKATRK.

The protein belongs to the universal ribosomal protein uS13 family. Part of the 30S ribosomal subunit. Forms a loose heterodimer with protein S19. Forms two bridges to the 50S subunit in the 70S ribosome.

Its function is as follows. Located at the top of the head of the 30S subunit, it contacts several helices of the 16S rRNA. In the 70S ribosome it contacts the 23S rRNA (bridge B1a) and protein L5 of the 50S subunit (bridge B1b), connecting the 2 subunits; these bridges are implicated in subunit movement. Contacts the tRNAs in the A and P-sites. This chain is Small ribosomal subunit protein uS13, found in Deinococcus radiodurans (strain ATCC 13939 / DSM 20539 / JCM 16871 / CCUG 27074 / LMG 4051 / NBRC 15346 / NCIMB 9279 / VKM B-1422 / R1).